The chain runs to 365 residues: MTAISSPINLFEYEQLAKTHLSQMAFDYYISGAGDEITLQENRAVFERIKLRPRMLVDVSQINLTTSVLGQPLQLPLLIAPMAFQCLAHTEGELATAMAAASAGTGMVLSTLSTKSLEEVAEVGSKFSPSLQWFQLYIHKDRGLTRALVERAYAAGYKALCLTVDAPVLGQRERDRRNEFVLPPGLHLANLTTISGLNIPHAPGESGLFTYFAQQLNPALTWDDLEWLQSLSPLPLVLKGILRGDDAARAVEYGAKAIVVSNHGGRQLDGAIASLDALPEIVAAVNGKAEVLLDGGIRRGTDIIKALAIGAQAVLIGRPVLWGLAVGGQAGVSHVISLLQKELNVAMALIGCSQLQDIDTSFLHL.

An FMN hydroxy acid dehydrogenase domain is found at 2–365; it reads TAISSPINLF…QDIDTSFLHL (364 aa). Tyr28 is a pyruvate binding site. Residues 81-83, Ser110, and Gln135 contribute to the FMN site; that span reads PMA. Tyr137 is a binding site for pyruvate. Residue Thr163 coordinates FMN. Residue Arg172 participates in pyruvate binding. The FMN site is built by Lys239 and Ser261. Pyruvate-binding residues include His263 and Arg266. The active-site Proton acceptor is His263. Residues 294–298 and Arg318 each bind FMN; that span reads DGGIR.

This sequence belongs to the FMN-dependent alpha-hydroxy acid dehydrogenase family. Homotetramer. Requires FMN as cofactor.

The enzyme catalyses (S)-lactate + O2 = pyruvate + H2O2. It carries out the reaction glyoxylate + O2 + H2O = oxalate + H2O2 + H(+). Catalyzes the oxidation of (S)-lactate (L-lactate) to pyruvate, with a reduction of O2 to H2O2. In extant N2-fixing cyanobacteria such as Nostoc, this enzyme primarily serves as an O2-scavenging enzyme, protecting nitrogenase that is extremely sensitive to O2, and is therefore an essential partner in N2 fixation. Also shows clear oxidase activity with glyoxylate in vitro, and low activity with glycerate, hydroxypyruvate and glycolate. The very low glycolate oxidase activity indicates that this enzyme is unlikely to be involved in photorespiratory glycolate metabolism, a pathway that seems to exist in this cyanobacterium, but in which the oxidation of glycolate is taken over by glycolate dehydrogenase (GlcD). Is not able to use D-lactate as substrate and does not show any dehydrogenase activity with NAD(+) or NADP(+). In Nostoc sp. (strain PCC 7120 / SAG 25.82 / UTEX 2576), this protein is L-lactate oxidase.